A 257-amino-acid chain; its full sequence is Ribonuclease HII (257 aa).

Positions 72-257 (TYIAGIDEVG…FAPIKDMIQK (186 aa)) constitute an RNase H type-2 domain. Aspartate 78, glutamate 79, and aspartate 170 together coordinate a divalent metal cation.

The protein belongs to the RNase HII family. It depends on Mn(2+) as a cofactor. The cofactor is Mg(2+).

The protein resides in the cytoplasm. The catalysed reaction is Endonucleolytic cleavage to 5'-phosphomonoester.. Its function is as follows. Endonuclease that specifically degrades the RNA of RNA-DNA hybrids. The sequence is that of Ribonuclease HII from Bacillus mycoides (strain KBAB4) (Bacillus weihenstephanensis).